A 240-amino-acid chain; its full sequence is MAFGPAAMGYDRAITIFSPDGSLYQVDYAFEAVKKGWTTLGVKTKNAVVILGEKKKASQLLDVDSIEKVFLLDDHVGCSFAGLASDGRILIDYARNSSLQHRLVYDEPISIDYLTKLISDVKQMYTQHGGVRPFGVALIVGGVDRGVTKLFMTEPSGQFMPYQAVAIGQGGYNATDYLEKNYKEDLSVEETILLALNALKVTLKPGEKLGPGNVEIGFATKEGQFRKMTLEERANYLQKI.

This sequence belongs to the peptidase T1A family. The 20S proteasome core is composed of 14 alpha and 14 beta subunits that assemble into four stacked heptameric rings, resulting in a barrel-shaped structure. The two inner rings, each composed of seven catalytic beta subunits, are sandwiched by two outer rings, each composed of seven alpha subunits. The catalytic chamber with the active sites is on the inside of the barrel. Has a gated structure, the ends of the cylinder being occluded by the N-termini of the alpha-subunits. Is capped at one or both ends by the proteasome regulatory ATPase, PAN.

The protein localises to the cytoplasm. The formation of the proteasomal ATPase PAN-20S proteasome complex, via the docking of the C-termini of PAN into the intersubunit pockets in the alpha-rings, triggers opening of the gate for substrate entry. Interconversion between the open-gate and close-gate conformations leads to a dynamic regulation of the 20S proteasome proteolysis activity. Component of the proteasome core, a large protease complex with broad specificity involved in protein degradation. This is Proteasome subunit alpha from Metallosphaera sedula (strain ATCC 51363 / DSM 5348 / JCM 9185 / NBRC 15509 / TH2).